The primary structure comprises 881 residues: Glutamate--tRNA ligase (881 aa).

The interval 1-480 (MSVRVRLAPS…ILRFKKSIGQ (480 aa)) is glutamyl-tRNA synthetase. A 'HIGH' region motif is present at residues 9 to 19 (PSPTGNLHIGT). Residues 248–252 (KLSKR) carry the 'KMSKS' region motif. Lysine 251 is an ATP binding site. The unknown stretch occupies residues 481–881 (EIEDTKIEDT…IKREIFGKPS (401 aa)). The segment covering 488–502 (EDTKKAETTPHKSKG) has biased composition (basic and acidic residues). The tract at residues 488–747 (EDTKKAETTP…PTATDAETRE (260 aa)) is disordered. Over residues 522–548 (QTQTTKPPKKGQTATPVATTPTATDVT) the composition is skewed to low complexity. The span at 549-562 (ENTSVGTQETQSQI) shows a compositional bias: polar residues. The segment covering 563 to 576 (TTPVATTPTATDVT) has biased composition (low complexity). Residues 577 to 590 (ENTSVGTQETQSQI) show a composition bias toward polar residues. Residues 591–604 (TTPVATTPTATDVT) show a composition bias toward low complexity. Polar residues predominate over residues 605–618 (ENTSVETQETQSQI). Over residues 619–632 (TTPVATTPTATDVT) the composition is skewed to low complexity. Polar residues predominate over residues 633–646 (ENTSVETQETQSQI). The span at 647–660 (TTPVATTPTATDVT) shows a compositional bias: low complexity. Over residues 661 to 674 (ENTSVGTQETQSQI) the composition is skewed to polar residues. Positions 675–688 (TTPVATTPTATDVT) are enriched in low complexity. The segment covering 689–702 (ENTSVETQETQSQI) has biased composition (polar residues). The span at 703–720 (TTPVATTSTATDVTENTS) shows a compositional bias: low complexity. A compositionally biased stretch (polar residues) spans 721–730 (VETQETQSQI). The span at 731 to 742 (TTPVATTPTATD) shows a compositional bias: low complexity. A run of 2 helical transmembrane segments spans residues 809–829 (LFGWLALVILTFTFMAVVIEA) and 832–852 (GIPILSIIFELIGVIYLVWFV).

It belongs to the class-I aminoacyl-tRNA synthetase family. Glutamate--tRNA ligase type 1 subfamily. As to quaternary structure, monomer.

It is found in the cytoplasm. It localises to the cell membrane. The enzyme catalyses tRNA(Glu) + L-glutamate + ATP = L-glutamyl-tRNA(Glu) + AMP + diphosphate. Its function is as follows. Catalyzes the attachment of glutamate to tRNA(Glu) in a two-step reaction: glutamate is first activated by ATP to form Glu-AMP and then transferred to the acceptor end of tRNA(Glu). This Trichodesmium erythraeum (strain IMS101) protein is Glutamate--tRNA ligase (gltX).